The primary structure comprises 335 residues: MLLIGVAGTTLSAQEVDWLQDDAVAGVVLFKRNFASRAQIVELSAALREAAPRPLLLAVDQEGGRVQRFHEGYSALPPLQGIGALYVRDPEAALELAFEHAWLMASEVRASGVDLSFAPVVDLGRGNRAIGDRAFSDDPHVVAAFAKAYVQGMHAAGMPVTLKHFPGHGSVLEDTHVDLAVDVRALETLESEDLVPFAAGIAAGADAVMMAHVVYPNVAPEPAGFSAHWIEVILRGRMGFRGVVFSDDIGMAAVRGVGGVVGCVHAHLDAGCDVVLVCHPELVNDALSAVAGRRSNTAALIGLIGRGVLGWDGLLADVRYGSIQSHLFERFGTST.

Substrate-binding positions include aspartate 60, arginine 68, arginine 133, and 163 to 164 (KH). Histidine 176 acts as the Proton donor/acceptor in catalysis. Aspartate 247 acts as the Nucleophile in catalysis.

Belongs to the glycosyl hydrolase 3 family. NagZ subfamily.

The protein resides in the cytoplasm. The enzyme catalyses Hydrolysis of terminal non-reducing N-acetyl-D-hexosamine residues in N-acetyl-beta-D-hexosaminides.. It functions in the pathway cell wall biogenesis; peptidoglycan recycling. Plays a role in peptidoglycan recycling by cleaving the terminal beta-1,4-linked N-acetylglucosamine (GlcNAc) from peptide-linked peptidoglycan fragments, giving rise to free GlcNAc, anhydro-N-acetylmuramic acid and anhydro-N-acetylmuramic acid-linked peptides. In Xylella fastidiosa (strain M23), this protein is Beta-hexosaminidase.